Consider the following 330-residue polypeptide: Ketol-acid reductoisomerase (NADP(+)) (330 aa).

Positions 1-181 (MNIYYEQDAD…GGTKAGVIET (181 aa)) constitute a KARI N-terminal Rossmann domain. Residues 24-27 (YGSQ), K47, S50, S52, and 82-85 (DQTQ) contribute to the NADP(+) site. H107 is an active-site residue. Residue G133 coordinates NADP(+). The 146-residue stretch at 182–327 (SFKDETETDL…AKLRGMMSWL (146 aa)) folds into the KARI C-terminal knotted domain. The Mg(2+) site is built by D190, E194, E226, and E230. Position 251 (S251) interacts with substrate.

It belongs to the ketol-acid reductoisomerase family. Mg(2+) is required as a cofactor.

The enzyme catalyses (2R)-2,3-dihydroxy-3-methylbutanoate + NADP(+) = (2S)-2-acetolactate + NADPH + H(+). The catalysed reaction is (2R,3R)-2,3-dihydroxy-3-methylpentanoate + NADP(+) = (S)-2-ethyl-2-hydroxy-3-oxobutanoate + NADPH + H(+). The protein operates within amino-acid biosynthesis; L-isoleucine biosynthesis; L-isoleucine from 2-oxobutanoate: step 2/4. Its pathway is amino-acid biosynthesis; L-valine biosynthesis; L-valine from pyruvate: step 2/4. Functionally, involved in the biosynthesis of branched-chain amino acids (BCAA). Catalyzes an alkyl-migration followed by a ketol-acid reduction of (S)-2-acetolactate (S2AL) to yield (R)-2,3-dihydroxy-isovalerate. In the isomerase reaction, S2AL is rearranged via a Mg-dependent methyl migration to produce 3-hydroxy-3-methyl-2-ketobutyrate (HMKB). In the reductase reaction, this 2-ketoacid undergoes a metal-dependent reduction by NADPH to yield (R)-2,3-dihydroxy-isovalerate. In Chlorobaculum tepidum (strain ATCC 49652 / DSM 12025 / NBRC 103806 / TLS) (Chlorobium tepidum), this protein is Ketol-acid reductoisomerase (NADP(+)).